A 668-amino-acid chain; its full sequence is MDTRVLRLTLALVALSGVLADSESCSSAIVNDYKLKQKEIQHLVDTINKPVYPDFKDTRGIIDESKLKGLGTLPRREVFSLFDERNWAEAAKVVELLLEPKTFREFIHLADIIHHRVNEDLFLYALSVAIAHRPDCQGVQVPRVLDIYPDKFLRKEVIHKIKEVSNEGAYLDKVPVIDATEVSDNHLDPNQELLYFLEDLGMNSHHHHWHVIHPAIWLPKHGGVKDRKGELFFYMHKQMVARYDTERLSNDLPRVRPFENWNDPIDEGYSPHLIIDKTGYKYAYRPQGVIVHDLPNLPKTKMFEWKNRIMVGIRKGSLISANKTQVPLNNDHGIDLLGDVVESSLLSVNRVFYGNLHCYAHVIAGKVTDPQSTYGEKNGAMYDVATSARDPLFYSWHKFIDNIFQEHKETLQPYNKDELNFPDVQVDSLRINVANGTYENIVRTYWQNSLFKIAKGFTFTTEGSVLVKVKHLNHETFYYNLEVTNNALEEKHGVVRIFGAVINDERGHPYILNDQRHLVIELDKFTVNLKPGKNSVRQPCYNSAVTAKYDVFYGDVESQKPQEGCNCGWPDYMLLPKGKYEGLRFRVFAIVTNHDEDKVSDQETCLCGDAVAYCGAHNQKYPDKKPMGFPFDRRIDERTFEHFHTPNMIATDVIIKFTGEFLPPKGDI.

A signal peptide spans 1–22 (MDTRVLRLTLALVALSGVLADS). Residues His-206, His-210, and His-236 each coordinate Cu cation. A glycan (N-linked (GlcNAc...) asparagine) is linked at Asn-322. Cu cation contacts are provided by His-357, His-361, and His-397. The cysteines at positions 567 and 614 are disulfide-linked.

This sequence belongs to the tyrosinase family. Hemocyanin subfamily. 36-chain polymer consisting of 6 hexamers, each of which includes 4 different chains, A, B, C and D. As to expression, hemolymph.

The protein localises to the secreted. It localises to the extracellular space. Functionally, hemocyanins are copper-containing oxygen carriers occurring freely dissolved in the hemolymph of many mollusks and arthropods. The polypeptide is Hemocyanin subunit D (HCD) (Scutigera coleoptrata (House centipede)).